The chain runs to 414 residues: COUP transcription factor 2 (414 aa).

A disordered region spans residues 1 to 72; that stretch reads MAMVVSTWRD…PGGPGSDKQQ (72 aa). Residues 27-37 show a composition bias toward pro residues; sequence PPVPGPPPGAP. Positions 38–57 are enriched in low complexity; that stretch reads HTPQTPGQGGPASTPAQTAA. At Thr51 the chain carries Phosphothreonine. The span at 58–67 shows a compositional bias: gly residues; it reads GGQGGPGGPG. A DNA-binding region (nuclear receptor) is located at residues 76-151; the sequence is HIECVVCGDK…VGMRREAVQR (76 aa). 2 consecutive NR C4-type zinc fingers follow at residues 79–99 and 115–139; these read CVVC…CEGC and CRAN…LKKC. Residues 117 to 414 form an interaction with ZFPM2 region; sequence ANRNCPIDQH…SFNWPYMAIQ (298 aa). An NR LBD domain is found at 177 to 403; that stretch reads YLSGYISLLL…TLIRDMLLSG (227 aa). Residues 337-414 form an important for dimerization region; that stretch reads LQEKSQCALE…SFNWPYMAIQ (78 aa).

It belongs to the nuclear hormone receptor family. NR2 subfamily. As to quaternary structure, interacts with SQSTM1. Binds DNA as a dimer; homodimer or heterodimer with NR2F6. Interacts with NCOA1, NCOA2, NCOA3 and PPARGC1A. Interacts with ZFPM2.

The protein localises to the nucleus. Ligand-activated transcription factor. Activated by high concentrations of 9-cis-retinoic acid and all-trans-retinoic acid, but not by dexamethasone, cortisol or progesterone (in vitro). Regulation of the apolipoprotein A-I gene transcription. Binds to DNA site A. May be required to establish ovary identity during early gonad development. The polypeptide is COUP transcription factor 2 (NR2F2) (Bos taurus (Bovine)).